We begin with the raw amino-acid sequence, 506 residues long: Ribose import ATP-binding protein RbsA 2 (506 aa).

2 ABC transporter domains span residues 7-242 (LEMR…VGRP) and 250-497 (ERDI…TGVN). 39-46 (GENGAGKS) is a binding site for ATP.

It belongs to the ABC transporter superfamily. Ribose importer (TC 3.A.1.2.1) family. The complex is composed of an ATP-binding protein (RbsA), two transmembrane proteins (RbsC) and a solute-binding protein (RbsB).

The protein resides in the cell inner membrane. It carries out the reaction D-ribose(out) + ATP + H2O = D-ribose(in) + ADP + phosphate + H(+). In terms of biological role, part of the ABC transporter complex RbsABC involved in ribose import. Responsible for energy coupling to the transport system. The sequence is that of Ribose import ATP-binding protein RbsA 2 from Escherichia coli O157:H7.